The chain runs to 443 residues: Clustered-asparagine-rich protein (443 aa).

The region spanning 16-106 (TKLHIQNIPP…RNIDAKFAVP (91 aa)) is the RRM 1 domain. The tract at residues 253–279 (NHLNNNNNNINNNNNNNNNNNNNNNVM) is disordered. Low complexity predominate over residues 256-277 (NNNNNNINNNNNNNNNNNNNNN). In terms of domain architecture, RRM 2 spans 342–435 (SSITIMKKQN…KYLKVQLKKG (94 aa)).

The protein is Clustered-asparagine-rich protein of Plasmodium falciparum.